A 295-amino-acid chain; its full sequence is Glycine--tRNA ligase alpha subunit (295 aa).

Belongs to the class-II aminoacyl-tRNA synthetase family. As to quaternary structure, tetramer of two alpha and two beta subunits.

The protein localises to the cytoplasm. The catalysed reaction is tRNA(Gly) + glycine + ATP = glycyl-tRNA(Gly) + AMP + diphosphate. The chain is Glycine--tRNA ligase alpha subunit (glyQ) from Bacillus subtilis (strain 168).